A 95-amino-acid chain; its full sequence is Large ribosomal subunit protein uL23 (95 aa).

This sequence belongs to the universal ribosomal protein uL23 family. As to quaternary structure, part of the 50S ribosomal subunit. Contacts protein L29, and trigger factor when it is bound to the ribosome.

In terms of biological role, one of the early assembly proteins it binds 23S rRNA. One of the proteins that surrounds the polypeptide exit tunnel on the outside of the ribosome. Forms the main docking site for trigger factor binding to the ribosome. The chain is Large ribosomal subunit protein uL23 from Geobacillus kaustophilus (strain HTA426).